Reading from the N-terminus, the 453-residue chain is 5-hydroxytryptamine receptor 1 (453 aa).

The Extracellular segment spans residues 1–36 (MKSLKSSTHDVPHPEHVVWAPPAYDEQHHLFFSHGT). The chain crosses the membrane as a helical span at residues 37-57 (VLIGIVGSLIITVAVVGNVLV). Topologically, residues 58-74 (CLAIFTEPILSHSKSNF) are cytoplasmic. The helical transmembrane segment at 75–94 (FIVSLAVADLLLALLVMTFA) threads the bilayer. The Extracellular segment spans residues 95 to 110 (LVNDMYGYWLFGETFC). An intrachain disulfide couples Cys110 to Cys225. The chain crosses the membrane as a helical span at residues 111–133 (FIWMSADVMCETASIFSICVISY). Over 134–153 (DRLKQVQKPLHYEEFMTTTR) the chain is Cytoplasmic. Residues 154 to 175 (ALLIIACLWICSFVLSFVPIFL) form a helical membrane-spanning segment. At 176–223 (EWHELSVEEIKAIFKDNKTEKEKALEAHNFSSALNQTLGDNQKSNAKH) the chain is on the extracellular side. The chain crosses the membrane as a helical span at residues 224 to 244 (VCLFDVHFTYSVIYSFICFYV). Over 245 to 301 (PCTLMLTNYLRLFLIAQTHQVRIRSLQMTNPPQLRGQGASSYRNQGTQGSKAARTLT) the chain is Cytoplasmic. A helical membrane pass occupies residues 302–322 (IITGTFLACWLPFFIINPIAA). At 323-331 (ADEHLIPLE) the chain is on the extracellular side. Residues 332–352 (CFMVTIWLGYFNSSVNPIIYG) traverse the membrane as a helical segment. Residues 353–453 (TSNSKFRAAF…VFDSDTAFSS (101 aa)) are Cytoplasmic-facing. Positions 397-428 (DLSSSEHPSDACDTGRGKNSKGGDCATADPTK) are disordered. Residues 403 to 412 (HPSDACDTGR) are compositionally biased toward basic and acidic residues.

The protein belongs to the G-protein coupled receptor 1 family. In terms of tissue distribution, reproductive system.

The protein localises to the cell membrane. This is one of the several different receptors for 5-hydroxytryptamine (serotonin). 5-HT plays important roles in various behavioral and physiological processes in aplysia. These include feeding, locomotion, circadian rhythm, learning and memory, synaptic plasticity, and synaptic growth. This receptor is mediated by G proteins that stimulate phospholipase C. The sequence is that of 5-hydroxytryptamine receptor 1 (5HTB1) from Aplysia californica (California sea hare).